The sequence spans 574 residues: M-phase inducer phosphatase 2 (574 aa).

Disordered stretches follow at residues 31 to 51 (GFGFGSDGLLGSPERAASSSP) and 90 to 110 (RRTSECSLSSESSESSDAGLC). S42 is subject to Phosphoserine. A compositionally biased stretch (low complexity) spans 90–105 (RRTSECSLSSESSESS). The residue at position 166 (S166) is a Phosphoserine; by MELK. S246 bears the Phosphoserine mark. S319 is modified (phosphoserine; by MAPKAPK2 and MELK). The residue at position 319 (S319) is a Phosphoserine; by MELK and MAPK14. Residues 339–359 (DVPVLSKRRKSGTPLEEQQLE) form a disordered region. S349 is modified (phosphoserine; by AURKA). Phosphoserine; by BRSK1 and MAPK14 is present on S370. A Rhodanese domain is found at 425–532 (IVEKFVIVDC…FFPQHPNFCE (108 aa)). The active site involves C481. S557 bears the Phosphoserine mark.

This sequence belongs to the MPI phosphatase family. In terms of assembly, interacts with MAPK14 and 14-3-3 proteins. In terms of processing, phosphorylated by BRSK1 in vitro. Phosphorylated by CHEK1, which inhibits the activity of this protein. Phosphorylation at Ser-349 by AURKA might locally participate in the control of the onset of mitosis. Phosphorylation by MELK at Ser-166 promotes localization to the centrosome and the spindle poles during mitosis. Phosphorylation at Ser-319 and Ser-370 by MAPK14 is required for binding to 14-3-3 proteins.

Its subcellular location is the cytoplasm. The protein resides in the cytoskeleton. It is found in the microtubule organizing center. It localises to the centrosome. The protein localises to the spindle pole. It catalyses the reaction O-phospho-L-tyrosyl-[protein] + H2O = L-tyrosyl-[protein] + phosphate. Its activity is regulated as follows. Stimulated by B-type cyclins. Functionally, tyrosine protein phosphatase which functions as a dosage-dependent inducer of mitotic progression. Directly dephosphorylates CDK1 and stimulates its kinase activity. Required for G2/M phases of the cell cycle progression and abscission during cytokinesis in a ECT2-dependent manner. The three isoforms seem to have a different level of activity. The polypeptide is M-phase inducer phosphatase 2 (Cdc25b) (Rattus norvegicus (Rat)).